Here is a 122-residue protein sequence, read N- to C-terminus: MVRIAGRELPTNKRVDIALNYIYGIGPWRSRQILKELKVDFSTRVKDLLVGEIAAIREYIERNYVVESDLRRFELLNIKRLIEINSYKGKRHKMLLPVRGQRTRTNARTRRGVKRIIDLKGV.

This sequence belongs to the universal ribosomal protein uS13 family. In terms of assembly, part of the 30S ribosomal subunit.

The protein resides in the plastid. Its subcellular location is the chloroplast. In terms of biological role, located at the top of the head of the 30S subunit, it contacts several helices of the 16S rRNA. This is Small ribosomal subunit protein uS13c from Cyanidium caldarium (Red alga).